Reading from the N-terminus, the 108-residue chain is Heme oxygenase (staphylobilin-producing) (108 aa).

Positions 2–93 (FMAENRLQLQ…DDDGQQSPIL (92 aa)) constitute an ABM domain. Position 6 (N6) interacts with Fe cation. Residues 21-28 (RFYNRQGI) and H76 contribute to the heme site.

The protein belongs to the antibiotic biosynthesis monooxygenase family. Heme-degrading monooxygenase IsdG subfamily. As to quaternary structure, homodimer.

The protein resides in the cytoplasm. The catalysed reaction is heme b + 5 AH2 + 4 O2 + 2 H(+) = delta-staphylobilin + Fe(2+) + formaldehyde + 5 A + 4 H2O. It carries out the reaction heme b + 5 AH2 + 4 O2 + 2 H(+) = beta-staphylobilin + Fe(2+) + formaldehyde + 5 A + 4 H2O. In terms of biological role, allows bacterial pathogens to use the host heme as an iron source. Catalyzes the oxidative degradation of the heme macrocyclic porphyrin ring to the oxo-bilirubin chromophore staphylobilin (a mixture of the linear tetrapyrroles 5-oxo-delta-bilirubin and 15-oxo-beta-bilirubin) in the presence of a suitable electron donor such as ascorbate or NADPH--cytochrome P450 reductase, with subsequent release of free iron. The protein is Heme oxygenase (staphylobilin-producing) (isdI) of Staphylococcus aureus (strain Mu3 / ATCC 700698).